The sequence spans 479 residues: Protein ORD (479 aa).

The segment at 102 to 140 (KEEETEPESESDLDEGPSTSKQALERMVQRAERKAKEAS) is disordered. Residues 104–116 (EETEPESESDLDE) are compositionally biased toward acidic residues. Residues 124–140 (ALERMVQRAERKAKEAS) are compositionally biased toward basic and acidic residues.

In terms of assembly, interacts with Sce.

The protein resides in the nucleus. Its subcellular location is the chromosome. The protein localises to the centromere. In terms of biological role, essential for proper maintenance of sister-chromatid cohesion in both male and female meiosis. Mutations in ord cause premature separation of the sister chromatids in meiosis I and random segregation in both meiotic divisions. Required for chiasma maintenance in female meiosis. Mutations in ord reduce recombination in female meiosis. The sequence is that of Protein ORD (ord) from Drosophila melanogaster (Fruit fly).